A 284-amino-acid chain; its full sequence is Tropomyosin alpha-1 chain (284 aa).

The segment at 1 to 37 (MDAIKKKMQMLKLDKENALDRAEQAETDKKAAEERSK) is disordered. A coiled-coil region spans residues 1-284 (MDAIKKKMQM…DHALNDMTSI (284 aa)). Positions 12–37 (KLDKENALDRAEQAETDKKAAEERSK) are enriched in basic and acidic residues.

This sequence belongs to the tropomyosin family. As to quaternary structure, homodimer. Heterodimer of an alpha (TPM1, TPM3 or TPM4) and a beta (TPM2) chain.

It localises to the cytoplasm. The protein localises to the cytoskeleton. Binds to actin filaments in muscle and non-muscle cells. Plays a central role, in association with the troponin complex, in the calcium dependent regulation of vertebrate striated muscle contraction. Smooth muscle contraction is regulated by interaction with caldesmon. In non-muscle cells is implicated in stabilizing cytoskeleton actin filaments. This is Tropomyosin alpha-1 chain (tpma) from Danio rerio (Zebrafish).